The following is a 455-amino-acid chain: UDP-glycosyltransferase 79B2 (455 aa).

Residues serine 266, valine 325–glutamine 327, histidine 342–glutamate 350, and leucine 364–glutamine 367 contribute to the UDP-alpha-D-glucose site.

This sequence belongs to the UDP-glycosyltransferase family.

This is UDP-glycosyltransferase 79B2 (UGT79B2) from Arabidopsis thaliana (Mouse-ear cress).